The sequence spans 244 residues: 1-(5-phosphoribosyl)-5-[(5-phosphoribosylamino)methylideneamino] imidazole-4-carboxamide isomerase (244 aa).

The active-site Proton acceptor is Asp9. Asp131 (proton donor) is an active-site residue.

Belongs to the HisA/HisF family.

Its subcellular location is the cytoplasm. It carries out the reaction 1-(5-phospho-beta-D-ribosyl)-5-[(5-phospho-beta-D-ribosylamino)methylideneamino]imidazole-4-carboxamide = 5-[(5-phospho-1-deoxy-D-ribulos-1-ylimino)methylamino]-1-(5-phospho-beta-D-ribosyl)imidazole-4-carboxamide. It functions in the pathway amino-acid biosynthesis; L-histidine biosynthesis; L-histidine from 5-phospho-alpha-D-ribose 1-diphosphate: step 4/9. The protein is 1-(5-phosphoribosyl)-5-[(5-phosphoribosylamino)methylideneamino] imidazole-4-carboxamide isomerase of Campylobacter jejuni subsp. doylei (strain ATCC BAA-1458 / RM4099 / 269.97).